We begin with the raw amino-acid sequence, 131 residues long: Small ribosomal subunit protein uS11 (131 aa).

The protein belongs to the universal ribosomal protein uS11 family. Part of the 30S ribosomal subunit. Interacts with proteins S7 and S18. Binds to IF-3.

Its function is as follows. Located on the platform of the 30S subunit, it bridges several disparate RNA helices of the 16S rRNA. Forms part of the Shine-Dalgarno cleft in the 70S ribosome. This Natranaerobius thermophilus (strain ATCC BAA-1301 / DSM 18059 / JW/NM-WN-LF) protein is Small ribosomal subunit protein uS11.